We begin with the raw amino-acid sequence, 481 residues long: Phosphatidylinositol 4-kinase type 2-beta (481 aa).

A compositionally biased stretch (basic and acidic residues) spans 1-11 (MEDPSEPDRLA). The interval 1-82 (MEDPSEPDRL…VSRSSSAELD (82 aa)) is disordered. A phosphoserine mark is found at Ser12, Ser17, and Ser45. Positions 53-64 (AGEEGEAGDEEL) are enriched in acidic residues. The 332-residue stretch at 120–451 (GIFPERISQG…VQIPCVIVER (332 aa)) folds into the PI3K/PI4K catalytic domain. A G-loop region spans residues 126–132 (ISQGSSG). 2 residues coordinate ATP: Ser133 and Lys148. The tract at residues 153-155 (EPY) is important for substrate binding. Residues 161 to 174 (KWTKYVHKVCCPCC) form an important for interaction with membranes region. ATP-binding positions include 257-260 (QLFV) and 271-272 (RK). The tract at residues 264–272 (KEAEYWLRK) is important for interaction with membranes. The interval 301 to 309 (RNTDRGNDN) is catalytic loop. Positions 342–362 (AIDNGLAFPFKHPDEWRAYPF) are activation loop. ATP is bound at residue Asp344. Residues 357–366 (WRAYPFHWAW) are important for interaction with membranes.

Belongs to the PI3/PI4-kinase family. Type II PI4K subfamily. As to expression, widely expressed.

The protein localises to the cytoplasm. Its subcellular location is the cytosol. It is found in the golgi apparatus membrane. It localises to the endoplasmic reticulum membrane. The protein resides in the cell membrane. The protein localises to the early endosome membrane. It catalyses the reaction a 1,2-diacyl-sn-glycero-3-phospho-(1D-myo-inositol) + ATP = a 1,2-diacyl-sn-glycero-3-phospho-(1D-myo-inositol 4-phosphate) + ADP + H(+). Inhibited by phenylarsine oxide and adenosine. Activation through membrane association is stimulated by active RAC1. Its function is as follows. Together with PI4K2A and the type III PI4Ks (PIK4CA and PIK4CB) it contributes to the overall PI4-kinase activity of the cell. This contribution may be especially significant in plasma membrane, endosomal and Golgi compartments. The phosphorylation of phosphatidylinositol (PI) to PI4P is the first committed step in the generation of phosphatidylinositol 4,5-bisphosphate (PIP2), a precursor of the second messenger inositol 1,4,5-trisphosphate (InsP3). Contributes to the production of InsP3 in stimulated cells and is likely to be involved in the regulation of vesicular trafficking. The polypeptide is Phosphatidylinositol 4-kinase type 2-beta (PI4K2B) (Homo sapiens (Human)).